We begin with the raw amino-acid sequence, 366 residues long: MAHKLLNDTFLRALLRQPTDYTPIWLMRQAGRYLPEYNATRGRAGSFLGLAKSPAYATEVTLQPLDRYPLDAAILFSDILTVPDAMGLGLEFVTGEGPKFVRPVRTEDDVARLAVPDIDATLRYVTDAVREIRTALTDAQGRQRVPLIGFSGSPWTLACYMVEGGGSADFRTVKSMLYARPDLMHRILDVNARSVAAYLNAQIEAGAQAVMIFDTWGGALADGVYQRFSLQYIQQVVSQLKRDHGGEKVPVITFTKGGGLWLDEIAETGVDAVGLDWTVNLSKARERVGGKVALQGNIDPSVLFAPPASIRMEARAVLDSFGNHPGHVFNLGHGISQFTPPENVAELVDEVHRHSRAIRSGAHAPA.

Substrate-binding positions include 28–32 (RQAGR), D78, Y160, T215, and H333.

Belongs to the uroporphyrinogen decarboxylase family. In terms of assembly, homodimer.

The protein localises to the cytoplasm. It catalyses the reaction uroporphyrinogen III + 4 H(+) = coproporphyrinogen III + 4 CO2. It participates in porphyrin-containing compound metabolism; protoporphyrin-IX biosynthesis; coproporphyrinogen-III from 5-aminolevulinate: step 4/4. Catalyzes the decarboxylation of four acetate groups of uroporphyrinogen-III to yield coproporphyrinogen-III. The sequence is that of Uroporphyrinogen decarboxylase from Paraburkholderia phytofirmans (strain DSM 17436 / LMG 22146 / PsJN) (Burkholderia phytofirmans).